Reading from the N-terminus, the 1544-residue chain is Rho guanine nucleotide exchange factor 12 (1544 aa).

Positions 1-62 (MSGTQSTITD…KTKSSSEESR (62 aa)) are disordered. S2 carries the N-acetylserine modification. A compositionally biased stretch (basic and acidic residues) spans 28–45 (SPTDKKQKVERIASHDFD). S41 carries the post-translational modification Phosphoserine. The PDZ domain maps to 72-151 (CVIIQKDDNG…LTVQGRPPGS (80 aa)). Residues 194–262 (MGEENNVVHN…LSKATGSAQD (69 aa)) are a coiled coil. Residues 247–346 (PQLQEQLSKA…SLVGSPSTRI (100 aa)) are disordered. Composition is skewed to polar residues over residues 249-260 (LQEQLSKATGSA) and 293-309 (DCSS…NADS). The residue at position 309 (S309) is a Phosphoserine. Over residues 313-329 (GPKERIYLEENPEKSET) the composition is skewed to basic and acidic residues. The segment covering 330–344 (IQDTDTQSLVGSPST) has biased composition (polar residues). S341 carries the post-translational modification Phosphoserine. Residues 367 to 558 (GQCSCFQSIE…LMYMKHLGVK (192 aa)) form the RGSL domain. The tract at residues 570-706 (GRIGFLPKIK…GDTLDGTPRT (137 aa)) is disordered. Residues 582–592 (MKKDKEGEEKG) are compositionally biased toward basic and acidic residues. Residues 631 to 640 (STPSSVSPEP) show a composition bias toward polar residues. A Phosphoserine modification is found at S637. The span at 663-676 (ANSMSSVASGASFS) shows a compositional bias: low complexity. T736 is subject to Phosphothreonine. Residues 787–977 (KRQEVINELF…RQILNYVNQA (191 aa)) enclose the DH domain. One can recognise a PH domain in the interval 1019-1132 (KMIHEGPLVW…WQDLICRMAA (114 aa)). Over residues 1138–1149 (STKPIPLPQSTP) the composition is skewed to polar residues. Residues 1138–1179 (STKPIPLPQSTPGEGDNDEEDPSKLKEEQHGISVTGLQSPDR) form a disordered region. S1288, S1327, S1377, S1457, and S1541 each carry phosphoserine.

Interacts with GNA12 and GNA13, probably through the RGS-like domain. Interacts with RHOA, PLXNB1 and PLXNB2. Interacts through its PDZ domain with IGF1R beta subunit. Interacts with GCSAM. Found in a complex with ARHGEF11 and ARHGEF12; binding to ARHGEF11 and ARHGEF12 enhances CDC42 GEF activity of PLEKHG4B, and PLEKHG4B, in turn, inhibits ARHGEF11- and ARHGEF12-mediated RHOA activation. As to expression, ubiquitously expressed. Isoform 2 is found in jejunum and testis.

The protein localises to the cytoplasm. The protein resides in the membrane. Its function is as follows. May play a role in the regulation of RhoA GTPase by guanine nucleotide-binding alpha-12 (GNA12) and alpha-13 (GNA13). Acts as guanine nucleotide exchange factor (GEF) for RhoA GTPase and may act as GTPase-activating protein (GAP) for GNA12 and GNA13. The sequence is that of Rho guanine nucleotide exchange factor 12 (ARHGEF12) from Homo sapiens (Human).